We begin with the raw amino-acid sequence, 425 residues long: 3-phosphoshikimate 1-carboxyvinyltransferase (425 aa).

Residues Lys-22, Ser-23, and Arg-27 each contribute to the 3-phosphoshikimate site. Residue Lys-22 coordinates phosphoenolpyruvate. The phosphoenolpyruvate site is built by Gly-95 and Arg-123. 3-phosphoshikimate-binding residues include Ser-169, Ser-170, Gln-171, Ser-197, Asp-313, Asn-336, and Lys-340. Gln-171 is a phosphoenolpyruvate binding site. Asp-313 serves as the catalytic Proton acceptor. Residues Arg-344, Arg-386, and Lys-411 each coordinate phosphoenolpyruvate.

This sequence belongs to the EPSP synthase family. Monomer.

The protein resides in the cytoplasm. The catalysed reaction is 3-phosphoshikimate + phosphoenolpyruvate = 5-O-(1-carboxyvinyl)-3-phosphoshikimate + phosphate. It functions in the pathway metabolic intermediate biosynthesis; chorismate biosynthesis; chorismate from D-erythrose 4-phosphate and phosphoenolpyruvate: step 6/7. Catalyzes the transfer of the enolpyruvyl moiety of phosphoenolpyruvate (PEP) to the 5-hydroxyl of shikimate-3-phosphate (S3P) to produce enolpyruvyl shikimate-3-phosphate and inorganic phosphate. The polypeptide is 3-phosphoshikimate 1-carboxyvinyltransferase (Pseudoalteromonas translucida (strain TAC 125)).